Consider the following 87-residue polypeptide: MKLSIFFVLFFIAIAYCQPEFLDDEEDEVEETLPVAEEGREKSCITWRNSCMHNDKGCCFPWSCVCWSQTVSRNSSGKEKKCQCRLW.

A signal peptide spans 1 to 17; sequence MKLSIFFVLFFIAIAYC. The propeptide occupies 18–40; the sequence is QPEFLDDEEDEVEETLPVAEEGR. Cystine bridges form between Cys-44–Cys-59, Cys-51–Cys-64, Cys-58–Cys-84, and Cys-66–Cys-82.

The protein belongs to the neurotoxin omega-lctx family. Expressed by the venom gland.

It is found in the secreted. Functionally, modulates Cav2.1/CACNA1A voltage-gated calcium channels (P/Q-type currents) in rat cerebellar Purkinje cells and hippocampal CA1-CA3 neurons. At saturating concentrations (&gt;10 nM) decelerates activation kinetics and slightly increases peak amplitude without affecting deactivation kinetics. In vivo, does not cause death when intravenously injected into mice. In rat models, through its activity on Cav2.1/CACNA1A, has an ameliorative effect on memory defects provoked by hyperstimulation of N-methyl-D-aspartate receptors (NMDARs) in the hippocampus. The polypeptide is Omega-lycotoxin-Am1c (Alopecosa marikovskyi (Wolf spider)).